The sequence spans 643 residues: Phosphomethylpyrimidine synthase (643 aa).

Substrate is bound by residues N248, M277, Y306, H342, 362–364 (SRG), 403–406 (DGLR), and E442. H446 provides a ligand contact to Zn(2+). Residue Y469 coordinates substrate. H510 is a binding site for Zn(2+). [4Fe-4S] cluster contacts are provided by C590, C593, and C598.

The protein belongs to the ThiC family. As to quaternary structure, homodimer. [4Fe-4S] cluster serves as cofactor.

It carries out the reaction 5-amino-1-(5-phospho-beta-D-ribosyl)imidazole + S-adenosyl-L-methionine = 4-amino-2-methyl-5-(phosphooxymethyl)pyrimidine + CO + 5'-deoxyadenosine + formate + L-methionine + 3 H(+). It participates in cofactor biosynthesis; thiamine diphosphate biosynthesis. In terms of biological role, catalyzes the synthesis of the hydroxymethylpyrimidine phosphate (HMP-P) moiety of thiamine from aminoimidazole ribotide (AIR) in a radical S-adenosyl-L-methionine (SAM)-dependent reaction. The polypeptide is Phosphomethylpyrimidine synthase (Paraburkholderia phymatum (strain DSM 17167 / CIP 108236 / LMG 21445 / STM815) (Burkholderia phymatum)).